Here is a 138-residue protein sequence, read N- to C-terminus: Ribosome-binding factor A (138 aa).

Over residues 1-20 (MSSRPPSSSGPAGIPKGAPS) the composition is skewed to low complexity. The disordered stretch occupies residues 1–21 (MSSRPPSSSGPAGIPKGAPSQ).

Belongs to the RbfA family. In terms of assembly, monomer. Binds 30S ribosomal subunits, but not 50S ribosomal subunits or 70S ribosomes.

It localises to the cytoplasm. One of several proteins that assist in the late maturation steps of the functional core of the 30S ribosomal subunit. Associates with free 30S ribosomal subunits (but not with 30S subunits that are part of 70S ribosomes or polysomes). Required for efficient processing of 16S rRNA. May interact with the 5'-terminal helix region of 16S rRNA. This chain is Ribosome-binding factor A, found in Granulibacter bethesdensis (strain ATCC BAA-1260 / CGDNIH1).